The primary structure comprises 217 residues: Cytochrome c biogenesis ATP-binding export protein CcmA (217 aa).

The 211-residue stretch at 6–216 (LQLEQLACQR…QYKFFDQGNM (211 aa)) folds into the ABC transporter domain. 38–45 (GHNGIGKT) provides a ligand contact to ATP.

It belongs to the ABC transporter superfamily. CcmA exporter (TC 3.A.1.107) family. In terms of assembly, the complex is composed of two ATP-binding proteins (CcmA) and two transmembrane proteins (CcmB).

It is found in the cell inner membrane. It catalyses the reaction heme b(in) + ATP + H2O = heme b(out) + ADP + phosphate + H(+). Part of the ABC transporter complex CcmAB involved in the biogenesis of c-type cytochromes; once thought to export heme, this seems not to be the case, but its exact role is uncertain. Responsible for energy coupling to the transport system. The polypeptide is Cytochrome c biogenesis ATP-binding export protein CcmA (Histophilus somni (strain 129Pt) (Haemophilus somnus)).